The sequence spans 473 residues: Calcium uptake protein 1, mitochondrial (473 aa).

Residues 1–33 (MFRLRFIPAVAGLAAVSRRYHGVANHARSRRRL) constitute a mitochondrion transit peptide. The segment at 61-101 (SSVKHSMREETSEKEKEDADQAVESSDEDQPQEGKKKKARV) is disordered. A compositionally biased stretch (basic and acidic residues) spans 66–79 (SMREETSEKEKEDA). Residues 80–91 (DQAVESSDEDQP) show a composition bias toward acidic residues. A polybasic region region spans residues 96–107 (KKKARVGFRDRK). Residues 123–126 (KIFR) are k/R-ring. The EF-hand 1 domain maps to 215–250 (TPQRNFEIAFKMFDLNGDGEVDMEEFEQVQSIIRSQ). Ca(2+)-binding residues include Asp-228, Asn-230, Asp-232, Glu-234, and Glu-239. Residues 256-260 (RHRDR) form a k/R-ring region. An EF-hand 2 domain is found at 405 to 440 (LSDHVCDVVFALFDCDGNGELSNKEFIAIMKQRLMR). Ca(2+) is bound by residues Asp-418, Asp-420, Asn-422, Glu-424, and Glu-429. Positions 452–462 (RLMRAMWKCAQ) are C-helix region.

This sequence belongs to the MICU1 family. MICU1 subfamily. In terms of assembly, heterodimer; disulfide-linked; heterodimerizes with micu2. Component of the uniplex complex.

The protein resides in the mitochondrion intermembrane space. It localises to the mitochondrion inner membrane. Calcium sensor of the mitochondrial calcium uniporter (mcu) channel, which senses calcium level via its EF-hand domains. micu1 and micu2 form a disulfide-linked heterodimer that stimulates and inhibits MCU activity, depending on the concentration of calcium. At low calcium levels, micu1 occludes the pore of the MCU channel, preventing mitochondrial calcium uptake. At higher calcium levels, calcium-binding to micu1 and micu2 induces a conformational change that weakens mcu-micu1 interactions and moves the micu1-micu2 heterodimer away from the pore, allowing calcium permeation through the mcu channel. Also required to protect against manganese toxicity by preventing manganese uptake by mcu. The chain is Calcium uptake protein 1, mitochondrial (micu1) from Xenopus tropicalis (Western clawed frog).